Consider the following 114-residue polypeptide: DNA-directed RNA polymerase subunit omega (114 aa).

It belongs to the RNA polymerase subunit omega family. As to quaternary structure, the RNAP catalytic core consists of 2 alpha, 1 beta, 1 beta' and 1 omega subunit. When a sigma factor is associated with the core the holoenzyme is formed, which can initiate transcription.

The enzyme catalyses RNA(n) + a ribonucleoside 5'-triphosphate = RNA(n+1) + diphosphate. Functionally, promotes RNA polymerase assembly. Latches the N- and C-terminal regions of the beta' subunit thereby facilitating its interaction with the beta and alpha subunits. The sequence is that of DNA-directed RNA polymerase subunit omega from Novosphingobium aromaticivorans (strain ATCC 700278 / DSM 12444 / CCUG 56034 / CIP 105152 / NBRC 16084 / F199).